The following is a 151-amino-acid chain: MLP-like protein 329 (151 aa).

It belongs to the MLP family.

The sequence is that of MLP-like protein 329 (MLP329) from Arabidopsis thaliana (Mouse-ear cress).